Here is a 518-residue protein sequence, read N- to C-terminus: UDP-N-acetylmuramate--L-alanine ligase (518 aa).

An ATP-binding site is contributed by 158-164; the sequence is GTHGKTT.

The protein belongs to the MurCDEF family.

It is found in the cytoplasm. It carries out the reaction UDP-N-acetyl-alpha-D-muramate + L-alanine + ATP = UDP-N-acetyl-alpha-D-muramoyl-L-alanine + ADP + phosphate + H(+). Its pathway is cell wall biogenesis; peptidoglycan biosynthesis. Cell wall formation. This is UDP-N-acetylmuramate--L-alanine ligase from Crocosphaera subtropica (strain ATCC 51142 / BH68) (Cyanothece sp. (strain ATCC 51142)).